The sequence spans 303 residues: Signal recognition particle receptor FtsY (303 aa).

GTP-binding positions include 108–115, 190–194, and 254–257; these read GVNGAGKT, DTAGR, and TKLD.

Belongs to the GTP-binding SRP family. FtsY subfamily. As to quaternary structure, part of the signal recognition particle protein translocation system, which is composed of SRP and FtsY. SRP is a ribonucleoprotein composed of Ffh and a 4.5S RNA molecule.

Its subcellular location is the cell inner membrane. The protein resides in the cytoplasm. It carries out the reaction GTP + H2O = GDP + phosphate + H(+). Its function is as follows. Involved in targeting and insertion of nascent membrane proteins into the cytoplasmic membrane. Acts as a receptor for the complex formed by the signal recognition particle (SRP) and the ribosome-nascent chain (RNC). Interaction with SRP-RNC leads to the transfer of the RNC complex to the Sec translocase for insertion into the membrane, the hydrolysis of GTP by both Ffh and FtsY, and the dissociation of the SRP-FtsY complex into the individual components. In Rickettsia conorii (strain ATCC VR-613 / Malish 7), this protein is Signal recognition particle receptor FtsY.